The sequence spans 137 residues: Small ribosomal subunit protein uS19 (137 aa).

Belongs to the universal ribosomal protein uS19 family.

Protein S19 forms a complex with S13 that binds strongly to the 16S ribosomal RNA. In Methanospirillum hungatei JF-1 (strain ATCC 27890 / DSM 864 / NBRC 100397 / JF-1), this protein is Small ribosomal subunit protein uS19.